The chain runs to 443 residues: MIKNDTIAAIATPPGEGSIAIVRISGPEAIQITDKIFSGSVPSFSSHTAHLGTVSYNGQQIDQTLLLIMRAPRSFTGEDVVELQCHGGYFSCSQILAALIAEGARPALPGEFSQRAFLNGKIDLIQAEAIQNIIAADNLDAFHIAQNHFQGHFSKKVQQISSLIIESLAFIEVLADFPEEEQPDMQEPMNRLHEAILIIDDLIASFDQGQRLAQGTSIVLAGHPNAGKSSLLNALTNKNRAIVTDIPGTTRDILEENWMLQGKRIRLIDSAGQRETHNPIEQEGIERAIAAMEASEAILWVMDASQPPPPLPEILMRKPSLLLWNKSDLATPPHLETTLPQLAVSAKTGAGMIELKQFIQQWMQKQQLGKNGKVFLISSRHHTILQHMRTYLLSAQEGLQSQSPPEFIALELRQALQTTGNLSGSEINETILGEIFSRFCIGK.

Positions 23, 82, and 121 each coordinate (6S)-5-formyl-5,6,7,8-tetrahydrofolate. A TrmE-type G domain is found at 215-364 (GTSIVLAGHP…LKQFIQQWMQ (150 aa)). A K(+)-binding site is contributed by N225. Residues 225–230 (NAGKSS), 244–250 (TDIPGTT), and 269–272 (DSAG) each bind GTP. S229 contributes to the Mg(2+) binding site. K(+) is bound by residues T244, I246, and T249. T250 is a binding site for Mg(2+). A (6S)-5-formyl-5,6,7,8-tetrahydrofolate-binding site is contributed by K443.

It belongs to the TRAFAC class TrmE-Era-EngA-EngB-Septin-like GTPase superfamily. TrmE GTPase family. As to quaternary structure, homodimer. Heterotetramer of two MnmE and two MnmG subunits. The cofactor is K(+).

It is found in the cytoplasm. Functionally, exhibits a very high intrinsic GTPase hydrolysis rate. Involved in the addition of a carboxymethylaminomethyl (cmnm) group at the wobble position (U34) of certain tRNAs, forming tRNA-cmnm(5)s(2)U34. This chain is tRNA modification GTPase MnmE, found in Chlamydia abortus (strain DSM 27085 / S26/3) (Chlamydophila abortus).